The following is a 186-amino-acid chain: Elongation factor P (186 aa).

This sequence belongs to the elongation factor P family.

The protein localises to the cytoplasm. It functions in the pathway protein biosynthesis; polypeptide chain elongation. Functionally, involved in peptide bond synthesis. Stimulates efficient translation and peptide-bond synthesis on native or reconstituted 70S ribosomes in vitro. Probably functions indirectly by altering the affinity of the ribosome for aminoacyl-tRNA, thus increasing their reactivity as acceptors for peptidyl transferase. The protein is Elongation factor P of Cupriavidus metallidurans (strain ATCC 43123 / DSM 2839 / NBRC 102507 / CH34) (Ralstonia metallidurans).